A 557-amino-acid polypeptide reads, in one-letter code: Formate--tetrahydrofolate ligase 2 (557 aa).

Position 66 to 73 (66 to 73 (TPAGEGKT)) interacts with ATP.

Belongs to the formate--tetrahydrofolate ligase family.

The catalysed reaction is (6S)-5,6,7,8-tetrahydrofolate + formate + ATP = (6R)-10-formyltetrahydrofolate + ADP + phosphate. It participates in one-carbon metabolism; tetrahydrofolate interconversion. The polypeptide is Formate--tetrahydrofolate ligase 2 (Streptococcus pyogenes serotype M5 (strain Manfredo)).